The chain runs to 461 residues: Photosystem II CP43 reaction center protein (461 aa).

Positions methionine 1–glutamate 2 are excised as a propeptide. Position 3 is an N-acetylthreonine (threonine 3). A Phosphothreonine modification is found at threonine 3. The next 5 helical transmembrane spans lie at leucine 57–alanine 81, leucine 122–asparagine 143, lysine 166–threonine 188, lysine 243–serine 263, and tryptophan 279–alanine 300. Glutamate 355 is a binding site for [CaMn4O5] cluster. The helical transmembrane segment at arginine 435–proline 459 threads the bilayer.

It belongs to the PsbB/PsbC family. PsbC subfamily. PSII is composed of 1 copy each of membrane proteins PsbA, PsbB, PsbC, PsbD, PsbE, PsbF, PsbH, PsbI, PsbJ, PsbK, PsbL, PsbM, PsbT, PsbX, PsbY, PsbZ, Psb30/Ycf12, at least 3 peripheral proteins of the oxygen-evolving complex and a large number of cofactors. It forms dimeric complexes. The cofactor is Binds multiple chlorophylls and provides some of the ligands for the Ca-4Mn-5O cluster of the oxygen-evolving complex. It may also provide a ligand for a Cl- that is required for oxygen evolution. PSII binds additional chlorophylls, carotenoids and specific lipids..

It is found in the plastid. It localises to the chloroplast thylakoid membrane. Functionally, one of the components of the core complex of photosystem II (PSII). It binds chlorophyll and helps catalyze the primary light-induced photochemical processes of PSII. PSII is a light-driven water:plastoquinone oxidoreductase, using light energy to abstract electrons from H(2)O, generating O(2) and a proton gradient subsequently used for ATP formation. This is Photosystem II CP43 reaction center protein from Ceratophyllum demersum (Rigid hornwort).